A 191-amino-acid polypeptide reads, in one-letter code: Glycerol-3-phosphate acyltransferase (191 aa).

Helical transmembrane passes span 5 to 25 (IILILSYVIGSIPFSLIIAKI), 51 to 71 (LAVLALFLDSLKGFVAVYTAQ), 78 to 98 (DLYIYVSAILAVLGHMFPIWL), 114 to 134 (IALNISIALAFVFVWLIVFFI), and 153 to 173 (SFFFQKELFLILLTVAILIFL).

The protein belongs to the PlsY family. In terms of assembly, probably interacts with PlsX.

It localises to the cell membrane. The catalysed reaction is an acyl phosphate + sn-glycerol 3-phosphate = a 1-acyl-sn-glycero-3-phosphate + phosphate. The protein operates within lipid metabolism; phospholipid metabolism. Its function is as follows. Catalyzes the transfer of an acyl group from acyl-phosphate (acyl-PO(4)) to glycerol-3-phosphate (G3P) to form lysophosphatidic acid (LPA). This enzyme utilizes acyl-phosphate as fatty acyl donor, but not acyl-CoA or acyl-ACP. The protein is Glycerol-3-phosphate acyltransferase of Wolbachia pipientis subsp. Culex pipiens (strain wPip).